The primary structure comprises 433 residues: 3-phosphoshikimate 1-carboxyvinyltransferase (433 aa).

3-phosphoshikimate-binding residues include Lys-22, Ser-23, and Arg-27. Residue Lys-22 participates in phosphoenolpyruvate binding. Phosphoenolpyruvate-binding residues include Gly-94 and Arg-123. Residues Ser-168, Gln-170, Asp-319, and Lys-346 each contribute to the 3-phosphoshikimate site. Gln-170 serves as a coordination point for phosphoenolpyruvate. Asp-319 serves as the catalytic Proton acceptor. Positions 350 and 392 each coordinate phosphoenolpyruvate.

The protein belongs to the EPSP synthase family. In terms of assembly, monomer.

It localises to the cytoplasm. It carries out the reaction 3-phosphoshikimate + phosphoenolpyruvate = 5-O-(1-carboxyvinyl)-3-phosphoshikimate + phosphate. It functions in the pathway metabolic intermediate biosynthesis; chorismate biosynthesis; chorismate from D-erythrose 4-phosphate and phosphoenolpyruvate: step 6/7. In terms of biological role, catalyzes the transfer of the enolpyruvyl moiety of phosphoenolpyruvate (PEP) to the 5-hydroxyl of shikimate-3-phosphate (S3P) to produce enolpyruvyl shikimate-3-phosphate and inorganic phosphate. This is 3-phosphoshikimate 1-carboxyvinyltransferase from Roseiflexus sp. (strain RS-1).